A 233-amino-acid polypeptide reads, in one-letter code: Large ribosomal subunit protein uL1 (233 aa).

This sequence belongs to the universal ribosomal protein uL1 family. In terms of assembly, part of the 50S ribosomal subunit.

Functionally, binds directly to 23S rRNA. The L1 stalk is quite mobile in the ribosome, and is involved in E site tRNA release. Its function is as follows. Protein L1 is also a translational repressor protein, it controls the translation of the L11 operon by binding to its mRNA. This Shewanella oneidensis (strain ATCC 700550 / JCM 31522 / CIP 106686 / LMG 19005 / NCIMB 14063 / MR-1) protein is Large ribosomal subunit protein uL1.